The sequence spans 83 residues: MKASMFLALAGLVLLFVVGYASESEEKEFPRELLSKIFAVDDFKGEERGCKGFGDSCTPGKNECCPNYACSGKHKWCKVYLGK.

The N-terminal stretch at 1 to 21 (MKASMFLALAGLVLLFVVGYA) is a signal peptide. Positions 22–48 (SESEEKEFPRELLSKIFAVDDFKGEER) are excised as a propeptide. 3 disulfides stabilise this stretch: C50-C65, C57-C70, and C64-C77. Position 81 is a leucine amide (L81).

Belongs to the neurotoxin 10 (Hwtx-1) family. 15 (Hntx-3) subfamily. As to quaternary structure, monomer. As to expression, expressed by the venom gland.

Its subcellular location is the secreted. Functionally, lethal neurotoxin. Selectively blocks tetrodotoxin-sensitive voltage-gated sodium channels (Nav). Does not affect tetrodotoxin-resistant voltage-gated sodium channels or calcium channels. This Cyriopagopus hainanus (Chinese bird spider) protein is Mu-theraphotoxin-Hhn2e.